We begin with the raw amino-acid sequence, 110 residues long: Snake venom vascular endothelial growth factor toxin (110 aa).

Position 1 is a pyrrolidone carboxylic acid (Gln-1). Disulfide bonds link Cys-14–Cys-56, Cys-45–Cys-91, and Cys-49–Cys-93.

Belongs to the PDGF/VEGF growth factor family. Snake venom VEGF subfamily. In terms of assembly, homodimer; disulfide-linked. As to expression, expressed by the venom gland.

It is found in the secreted. In terms of biological role, snake venom VEGFs that may contribute to venom dispersion and prey subjugation by inducing vascular permeability and hypotension. This protein potently stimulates dermal human microvascular endothelial cell (dHMVEC) proliferation in a VEGFR-2 dependent manner. This stimulatory effect is correlated with activation of the MAPK Erk1/2 signaling pathway. It also appears to be a chemoattractant for migration of these cells and stimulates their radial migration in a collagen gel. In vivo, it induces angiogenesis in a Japanese quail assay. This pro-angiogenic effect may also be related to its interaction with VEGFR-2. In addition, it may induce an increase in capillary permeability after intradermal injection, as well as a drastic hypotensive effect after intravenous injection. The hypotension is mediated by nitric oxide (NO), which is produced by VEGF-activated endothelium NO synthase. This Daboia palaestinae (Palestine viper) protein is Snake venom vascular endothelial growth factor toxin.